Reading from the N-terminus, the 501-residue chain is Solute carrier family 2, facilitated glucose transporter member 5 (501 aa).

At methionine 1 the chain carries N-acetylmethionine. The Cytoplasmic segment spans residues 1 to 18; that stretch reads MEQQDQSMKEGRLTLVLA. A helical transmembrane segment spans residues 19–39; sequence LATLIAAFGSSFQYGYNVAAV. Position 32 (tyrosine 32) interacts with D-fructose. Topologically, residues 40 to 68 are extracellular; sequence NSPALLMQQFYNETYYGRTGEFMEDFPLT. Asparagine 51 carries an N-linked (GlcNAc...) asparagine glycan. Residues 69 to 91 traverse the membrane as a helical segment; it reads LLWSVTVSMFPFGGFIGSLLVGP. At 92–98 the chain is on the cytoplasmic side; it reads LVNKFGR. The helical transmembrane segment at 99–119 threads the bilayer; sequence KGALLFNNIFSIVPAILMGCS. At 120–126 the chain is on the extracellular side; sequence RVATSFE. Residues 127 to 149 form a helical membrane-spanning segment; the sequence is LIIISRLLVGICAGVSSNVVPMY. The Cytoplasmic segment spans residues 150 to 161; the sequence is LGELAPKNLRGA. The helical transmembrane segment at 162–182 threads the bilayer; it reads LGVVPQLFITVGILVAQIFGL. Glutamine 167 is a D-fructose binding site. Residues 183-192 are Extracellular-facing; that stretch reads RNLLANVDGW. A helical transmembrane segment spans residues 193–213; sequence PILLGLTGVPAALQLLLLPFF. Residues 214-277 are Cytoplasmic-facing; sequence PESPRYLLIQ…LFRMRSLRWQ (64 aa). Residues 278-298 traverse the membrane as a helical segment; sequence LLSIIVLMGGQQLSGVNAIYY. D-fructose-binding positions include glutamine 288 and 296–298; that span reads IYY. Over 299–313 the chain is Extracellular; the sequence is YADQIYLSAGVPEEH. A helical transmembrane segment spans residues 314–334; it reads VQYVTAGTGAVNVVMTFCAVF. Residues 335–342 are Cytoplasmic-facing; that stretch reads VVELLGRR. The chain crosses the membrane as a helical span at residues 343–363; it reads LLLLLGFSICLIACCVLTAAL. Residues 364 to 371 lie on the Extracellular side of the membrane; the sequence is ALQDTVSW. Residues 372-394 traverse the membrane as a helical segment; it reads MPYISIVCVISYVIGHALGPSPI. Histidine 387 provides a ligand contact to D-fructose. The Cytoplasmic portion of the chain corresponds to 395–412; it reads PALLITEIFLQSSRPSAF. The chain crosses the membrane as a helical span at residues 413–433; sequence MVGGSVHWLSNFTVGLIFPFI. 419-420 provides a ligand contact to D-fructose; that stretch reads HW. The Extracellular segment spans residues 434 to 439; it reads QEGLGP. A helical transmembrane segment spans residues 440–460; it reads YSFIVFAVICLLTTIYIFLIV. At 461-501 the chain is on the cytoplasmic side; the sequence is PETKAKTFIEINQIFTKMNKVSEVYPEKEELKELPPVTSEQ.

Detected in skeletal muscle, and in jejunum brush border membrane and basolateral membrane (at protein level). Expressed in small intestine, and at much lower levels in kidney, skeletal muscle, and adipose tissue.

It is found in the apical cell membrane. Its subcellular location is the cell membrane. It localises to the sarcolemma. The enzyme catalyses D-fructose(out) = D-fructose(in). The uptake of 2-deoxyglucose is inhibited by cytochalasin B. Fructose transport is inhibited by the flavonoids epigallocatechin gallate and apigenin but not quercetin. Functions as a fructose transporter that has only low activity with other monosaccharides. Can mediate the uptake of 2-deoxyglucose, but with low efficiency. Essential for fructose uptake in the small intestine. Plays a role in the regulation of salt uptake and blood pressure in response to dietary fructose. Required for the development of high blood pressure in response to high dietary fructose intake. The sequence is that of Solute carrier family 2, facilitated glucose transporter member 5 from Homo sapiens (Human).